The following is a 337-amino-acid chain: Visual pigment-like receptor peropsin (337 aa).

Residues Met-1–Asn-26 lie on the Extracellular side of the membrane. The N-linked (GlcNAc...) asparagine glycan is linked to Asn-8. Residues Ile-27–Ile-49 traverse the membrane as a helical segment. Topologically, residues Phe-50–Asn-61 are cytoplasmic. The helical transmembrane segment at Ala-62–Leu-87 threads the bilayer. At Tyr-88–Tyr-101 the chain is on the extracellular side. Cys-98 and Cys-175 are oxidised to a cystine. The helical transmembrane segment at Ala-102 to Val-121 threads the bilayer. Residues Asp-122–Thr-140 are Cytoplasmic-facing. The chain crosses the membrane as a helical span at residues Tyr-141 to Ala-164. At Ser-165–Ser-188 the chain is on the extracellular side. The chain crosses the membrane as a helical span at residues Tyr-189 to Val-212. At Thr-213–Lys-240 the chain is on the cytoplasmic side. Residues Met-241 to Ser-264 form a helical membrane-spanning segment. Residues Phe-265 to Pro-272 lie on the Extracellular side of the membrane. A helical transmembrane segment spans residues Pro-273 to Ala-297. Lys-284 is subject to N6-(retinylidene)lysine. Residues Asn-298–Ile-337 lie on the Cytoplasmic side of the membrane.

Belongs to the G-protein coupled receptor 1 family. Opsin subfamily. In terms of tissue distribution, found only in the eye, where it is localized to the retinal pigment epithelium (RPE). In the RPE, it is localized to the microvilli that surround the photoreceptor outer segments.

The protein localises to the membrane. Its function is as follows. May play a role in rpe physiology either by detecting light directly or by monitoring the concentration of retinoids or other photoreceptor-derived compounds. This chain is Visual pigment-like receptor peropsin (RRH), found in Homo sapiens (Human).